The sequence spans 1194 residues: F-box only protein 38 (1194 aa).

In terms of domain architecture, F-box spans 30-75 (MNQLSHEVLCHIFRYLPLQDIMCMECLSRKLKEAVTLYLRVVRVVD). The interval 59-119 (KLKEAVTLYL…LHPRYLERRR (61 aa)) is interaction with KLF7. 3 consecutive short sequence motifs (nuclear export signal) follow at residues 194–201 (LHLVGVNV), 307–316 (LEVDLGYLII), and 451–460 (LLPSLEFISL). Disordered regions lie at residues 487 to 529 (ALVS…FRPD), 577 to 776 (EEQA…DAES), 793 to 879 (RTGR…RARS), and 896 to 915 (KPCH…STSD). The segment covering 493-510 (NSNNDNDNNAPNNNANLH) has biased composition (low complexity). Threonine 592 is modified (phosphothreonine). A phosphoserine mark is found at serine 599, serine 601, and serine 607. Acidic residues predominate over residues 599–609 (SESDDEEDSLE). Composition is skewed to basic and acidic residues over residues 622-631 (RYSEREEKTG) and 683-701 (IKAD…KSKD). Low complexity predominate over residues 705 to 728 (SCSSSSSSTAASTAGNASSPSTAS). Phosphoserine is present on residues serine 742 and serine 746. The span at 764-774 (EDSEAMEEGDA) shows a compositional bias: acidic residues. The segment covering 793–804 (RTGRCSDEERPS) has biased composition (basic and acidic residues). Polar residues predominate over residues 855–867 (SSQPESCDVQSNE). Positions 896 to 906 (KPCHAMKRKRT) are enriched in basic residues. A Nuclear localization signal motif is present at residues 902–905 (KRKR).

In terms of assembly, part of the SCF (SKP1-CUL1-F-box) E3 ubiquitin-protein ligase complex SCF(FBXO38) composed of CUL1, SKP1, RBX1 and FBXO38. Interacts with KLF7. Interacts with PDCD1/PD-1. As to expression, expressed at high levels in embryo (developing brain, spinal cord, branchial arms and limbs). Widely expressed at low levels in adult tissues, with highest expression in testis. Expressed in postmeiotic spermatids.

The protein resides in the cytoplasm. The protein localises to the cytosol. Its subcellular location is the nucleus. It participates in protein modification; protein ubiquitination. Functionally, substrate recognition component of a SCF (SKP1-CUL1-F-box protein) E3 ubiquitin-protein ligase complex which mediates the ubiquitination and subsequent proteasomal degradation of PDCD1/PD-1, thereby regulating T-cells-mediated immunity. Required for anti-tumor activity of T-cells by promoting the degradation of PDCD1/PD-1; the PDCD1-mediated inhibitory pathway being exploited by tumors to attenuate anti-tumor immunity and facilitate tumor survival. May indirectly stimulate the activity of transcription factor KLF7, a regulator of neuronal differentiation, without promoting KLF7 ubiquitination. This Mus musculus (Mouse) protein is F-box only protein 38.